Here is a 133-residue protein sequence, read N- to C-terminus: IgW chain C region, secreted form 2 (133 aa).

In terms of domain architecture, Ig-like spans 1 to 71 (VISGFYPDSV…TGSRFNDRIS (71 aa)). N-linked (GlcNAc...) asparagine glycosylation is found at asparagine 32 and asparagine 112. The tract at residues 76–133 (KGGTVNLPVPGGNTPCTCPPSSCSGCMPKLVYQTDLNVTLENGGQLQYNCHQQACKIK) is secretory tail.

Expressed mainly in lymphoid tissues including spleen, epigonal organ and circulating lymphocytes.

It localises to the secreted. The sequence is that of IgW chain C region, secreted form 2 from Heterodontus francisci (Horn shark).